A 287-amino-acid chain; its full sequence is Succinate dehydrogenase [ubiquinone] iron-sulfur subunit, mitochondrial (287 aa).

Residues 1 to 23 (MISNVLKRASVLARSNGIQSAFY) constitute a mitochondrion transit peptide. Residues 51–140 (FQVYRYNEET…GDTVKVYPLP (90 aa)) enclose the 2Fe-2S ferredoxin-type domain. Residues C101, C106, C109, and C121 each coordinate [2Fe-2S] cluster. A 4Fe-4S ferredoxin-type domain is found at 186-216 (NRHKLDGLYECILCACCSTSCPSYWWSEGGD). [4Fe-4S] cluster is bound by residues C196, C199, and C202. C206 serves as a coordination point for [3Fe-4S] cluster. A ubiquinone is bound at residue W211. Residues C257 and C263 each contribute to the [3Fe-4S] cluster site. [4Fe-4S] cluster is bound at residue C267.

The protein belongs to the succinate dehydrogenase/fumarate reductase iron-sulfur protein family. Component of complex II composed of four subunits: the flavoprotein (FP) SDHA, iron-sulfur protein (IP) SDHB, and a cytochrome b composed of a large and a small subunit. It depends on [2Fe-2S] cluster as a cofactor. Requires [3Fe-4S] cluster as cofactor. [4Fe-4S] cluster serves as cofactor.

The protein localises to the mitochondrion inner membrane. It catalyses the reaction a quinone + succinate = fumarate + a quinol. It participates in carbohydrate metabolism; tricarboxylic acid cycle; fumarate from succinate (eukaryal route): step 1/1. Functionally, iron-sulfur protein (IP) subunit of succinate dehydrogenase (SDH) that is involved in complex II of the mitochondrial electron transport chain and is responsible for transferring electrons from succinate to ubiquinone (coenzyme Q). This Dictyostelium discoideum (Social amoeba) protein is Succinate dehydrogenase [ubiquinone] iron-sulfur subunit, mitochondrial (sdhB).